The sequence spans 64 residues: Small, acid-soluble spore protein D (64 aa).

It belongs to the alpha/beta-type SASP family.

In terms of biological role, SASP are bound to spore DNA. They are double-stranded DNA-binding proteins that cause DNA to change to an a-like conformation. They protect the DNA backbone from chemical and enzymatic cleavage and are thus involved in dormant spore's high resistance to UV light. This Bacillus subtilis (strain 168) protein is Small, acid-soluble spore protein D (sspD).